We begin with the raw amino-acid sequence, 472 residues long: UDP-N-acetylmuramate--L-alanine ligase (472 aa).

122–128 (GTHGKTT) is a binding site for ATP.

Belongs to the MurCDEF family.

It is found in the cytoplasm. The enzyme catalyses UDP-N-acetyl-alpha-D-muramate + L-alanine + ATP = UDP-N-acetyl-alpha-D-muramoyl-L-alanine + ADP + phosphate + H(+). The protein operates within cell wall biogenesis; peptidoglycan biosynthesis. Functionally, cell wall formation. The sequence is that of UDP-N-acetylmuramate--L-alanine ligase from Thermobifida fusca (strain YX).